A 341-amino-acid polypeptide reads, in one-letter code: Glycerol-3-phosphate dehydrogenase [NAD(P)+] (341 aa).

NADPH contacts are provided by Ser-14, Phe-15, Arg-35, and Lys-108. Sn-glycerol 3-phosphate is bound by residues Lys-108 and Gly-136. Ala-140 contributes to the NADPH binding site. 5 residues coordinate sn-glycerol 3-phosphate: Lys-191, Asp-244, Ser-254, Arg-255, and Asn-256. Catalysis depends on Lys-191, which acts as the Proton acceptor. Arg-255 provides a ligand contact to NADPH. The NADPH site is built by Val-279 and Glu-281.

This sequence belongs to the NAD-dependent glycerol-3-phosphate dehydrogenase family.

It is found in the cytoplasm. The catalysed reaction is sn-glycerol 3-phosphate + NAD(+) = dihydroxyacetone phosphate + NADH + H(+). It catalyses the reaction sn-glycerol 3-phosphate + NADP(+) = dihydroxyacetone phosphate + NADPH + H(+). Its pathway is membrane lipid metabolism; glycerophospholipid metabolism. Catalyzes the reduction of the glycolytic intermediate dihydroxyacetone phosphate (DHAP) to sn-glycerol 3-phosphate (G3P), the key precursor for phospholipid synthesis. This is Glycerol-3-phosphate dehydrogenase [NAD(P)+] from Pseudomonas savastanoi pv. phaseolicola (strain 1448A / Race 6) (Pseudomonas syringae pv. phaseolicola (strain 1448A / Race 6)).